Here is a 178-residue protein sequence, read N- to C-terminus: Probable major fimbrial subunit LpfA (178 aa).

The signal sequence occupies residues 1 to 24; it reads MEFFMKKVVFALTALALTSGTVFA.

The protein belongs to the fimbrial protein family.

The protein resides in the fimbrium. Functionally, part of the lpfABCC'DE fimbrial operon. LP fimbriae may participate in the interaction with eukaryotic cells by assisting in microcolony formation. This is Probable major fimbrial subunit LpfA (lpfA) from Escherichia coli O157:H7.